We begin with the raw amino-acid sequence, 165 residues long: Protein SprT (165 aa).

A SprT-like domain is found at 20–163 (EKLAQANLKL…RCVHCGEQLV (144 aa)). H78 is a binding site for Zn(2+). E79 is a catalytic residue. H82 provides a ligand contact to Zn(2+).

The protein belongs to the SprT family. Zn(2+) serves as cofactor.

The protein resides in the cytoplasm. The chain is Protein SprT from Escherichia coli O127:H6 (strain E2348/69 / EPEC).